The primary structure comprises 238 residues: Small ribosomal subunit protein uS2c (238 aa).

It belongs to the universal ribosomal protein uS2 family.

The protein localises to the plastid. The protein resides in the chloroplast. The chain is Small ribosomal subunit protein uS2c (rps2) from Nuphar advena (Common spatterdock).